The chain runs to 304 residues: Ribosomal RNA small subunit methyltransferase H (304 aa).

S-adenosyl-L-methionine is bound by residues 47-49 (GGH), aspartate 66, phenylalanine 93, aspartate 108, and glutamine 115.

Belongs to the methyltransferase superfamily. RsmH family.

It is found in the cytoplasm. It catalyses the reaction cytidine(1402) in 16S rRNA + S-adenosyl-L-methionine = N(4)-methylcytidine(1402) in 16S rRNA + S-adenosyl-L-homocysteine + H(+). Its function is as follows. Specifically methylates the N4 position of cytidine in position 1402 (C1402) of 16S rRNA. The sequence is that of Ribosomal RNA small subunit methyltransferase H from Prochlorococcus marinus (strain NATL1A).